The following is a 353-amino-acid chain: Nicotinate-nucleotide--dimethylbenzimidazole phosphoribosyltransferase (353 aa).

Glu318 acts as the Proton acceptor in catalysis.

This sequence belongs to the CobT family.

The catalysed reaction is 5,6-dimethylbenzimidazole + nicotinate beta-D-ribonucleotide = alpha-ribazole 5'-phosphate + nicotinate + H(+). It functions in the pathway nucleoside biosynthesis; alpha-ribazole biosynthesis; alpha-ribazole from 5,6-dimethylbenzimidazole: step 1/2. Catalyzes the synthesis of alpha-ribazole-5'-phosphate from nicotinate mononucleotide (NAMN) and 5,6-dimethylbenzimidazole (DMB). The polypeptide is Nicotinate-nucleotide--dimethylbenzimidazole phosphoribosyltransferase (Roseiflexus sp. (strain RS-1)).